The sequence spans 250 residues: MIEKDFVTEGLKRTRIDEYLEKELERAGYGGMDVQITPLGTMVVVYAERPGMVIGRGGKNVRAITNTLKNDFGLDNPQIEVKEVSVPELNPKIMAYKIANMLQRGMHFRRVAYSTIRRIMGAGAQGVEVTISGKIRGSRSAVAKFVEGYIKKCGEPSIRLVEEGFATVQLKPGVLGIYVRIMPPETVLPDSVEILPPKMEIIEDDEVVEVEELDDSEEIVEEEIVEEVEDLDELEEIVEEESAEEAKEDS.

Residues 16–85 (IDEYLEKELE…NPQIEVKEVS (70 aa)) form the KH type-2 domain.

This sequence belongs to the universal ribosomal protein uS3 family. In terms of assembly, part of the 30S ribosomal subunit.

Binds the lower part of the 30S subunit head. This is Small ribosomal subunit protein uS3 from Methanobrevibacter smithii (strain ATCC 35061 / DSM 861 / OCM 144 / PS).